The following is a 128-amino-acid chain: Large ribosomal subunit protein bL17 (128 aa).

Belongs to the bacterial ribosomal protein bL17 family. In terms of assembly, part of the 50S ribosomal subunit. Contacts protein L32.

The protein is Large ribosomal subunit protein bL17 of Histophilus somni (strain 129Pt) (Haemophilus somnus).